Reading from the N-terminus, the 308-residue chain is Apolipoprotein F (308 aa).

It belongs to the apolipoprotein F family.

It is found in the secreted. Its function is as follows. Minor apolipoprotein that associates with LDL. Inhibits cholesteryl ester transfer protein (CETP) activity and appears to be an important regulator of cholesterol transport. Also associates to a lesser degree with VLDL, Apo-AI and Apo-AII. This chain is Apolipoprotein F (Apof), found in Rattus norvegicus (Rat).